The following is a 104-amino-acid chain: Large ribosomal subunit protein uL24 (104 aa).

The protein belongs to the universal ribosomal protein uL24 family. Part of the 50S ribosomal subunit.

Functionally, one of two assembly initiator proteins, it binds directly to the 5'-end of the 23S rRNA, where it nucleates assembly of the 50S subunit. One of the proteins that surrounds the polypeptide exit tunnel on the outside of the subunit. This Citrobacter koseri (strain ATCC BAA-895 / CDC 4225-83 / SGSC4696) protein is Large ribosomal subunit protein uL24.